The primary structure comprises 202 residues: MSSFESVVVIDGKGHLLGRLASIVAKQLLNGQKIVVVRCEALNISGEFFRAKLKYHSYLRKMTRYNPTRGGPFHFRAPSRIFYKAVRGMIPHKTARGAAALERLKVFEGVPPPYDKKKKMVVPQALRVLRLQPGRKFCTVGRLSSEVGWKYEDVVSRLEERRKAKGAAYYERKKVAARQLSEAKKSAKVNDKTAEALKEFGY.

This sequence belongs to the universal ribosomal protein uL13 family. As to quaternary structure, component of the large ribosomal subunit (LSU). Mature N.crassa ribosomes consist of a small (40S) and a large (60S) subunit. The 40S small subunit contains 1 molecule of ribosomal RNA (18S rRNA) and at least 32 different proteins. The large 60S subunit contains 3 rRNA molecules (26S, 5.8S and 5S rRNA) and at least 42 different proteins.

It localises to the cytoplasm. Functionally, component of the ribosome, a large ribonucleoprotein complex responsible for the synthesis of proteins in the cell. The small ribosomal subunit (SSU) binds messenger RNAs (mRNAs) and translates the encoded message by selecting cognate aminoacyl-transfer RNA (tRNA) molecules. The large subunit (LSU) contains the ribosomal catalytic site termed the peptidyl transferase center (PTC), which catalyzes the formation of peptide bonds, thereby polymerizing the amino acids delivered by tRNAs into a polypeptide chain. The nascent polypeptides leave the ribosome through a tunnel in the LSU and interact with protein factors that function in enzymatic processing, targeting, and the membrane insertion of nascent chains at the exit of the ribosomal tunnel. The sequence is that of Large ribosomal subunit protein uL13 (crp-46) from Neurospora crassa (strain ATCC 24698 / 74-OR23-1A / CBS 708.71 / DSM 1257 / FGSC 987).